The primary structure comprises 355 residues: Probable sugar phosphate/phosphate translocator At3g10290 (355 aa).

The interval 19-51 is disordered; the sequence is QKKQPNLSISSTTKMNKKNPDQKSDMSSSSSSP. The segment covering 22 to 32 has biased composition (polar residues); the sequence is QPNLSISSTTK. Helical transmembrane passes span 55–75, 89–109, 124–144, 150–170, 177–197, 198–218, 239–259, 277–297, 305–325, and 328–348; these read TLFI…VLLL, IFLT…SIVF, FLKV…GNIS, VSFN…FAYI, AWVT…ASGG, EPGF…ARAF, LMLY…IFME, YILL…NFLV, TLQV…ILLF, and PVTV…VAYG.

The protein belongs to the TPT transporter family. TPT (TC 2.A.7.9) subfamily.

It is found in the membrane. In Arabidopsis thaliana (Mouse-ear cress), this protein is Probable sugar phosphate/phosphate translocator At3g10290.